The following is a 426-amino-acid chain: Serine--tRNA ligase (426 aa).

233-235 is a binding site for L-serine; sequence TAE. 264–266 is a binding site for ATP; it reads RSE. Glutamate 287 provides a ligand contact to L-serine. 351–354 provides a ligand contact to ATP; that stretch reads EISS. Serine 387 is a binding site for L-serine.

The protein belongs to the class-II aminoacyl-tRNA synthetase family. Type-1 seryl-tRNA synthetase subfamily. As to quaternary structure, homodimer. The tRNA molecule binds across the dimer.

Its subcellular location is the cytoplasm. It carries out the reaction tRNA(Ser) + L-serine + ATP = L-seryl-tRNA(Ser) + AMP + diphosphate + H(+). The catalysed reaction is tRNA(Sec) + L-serine + ATP = L-seryl-tRNA(Sec) + AMP + diphosphate + H(+). It functions in the pathway aminoacyl-tRNA biosynthesis; selenocysteinyl-tRNA(Sec) biosynthesis; L-seryl-tRNA(Sec) from L-serine and tRNA(Sec): step 1/1. Functionally, catalyzes the attachment of serine to tRNA(Ser). Is also able to aminoacylate tRNA(Sec) with serine, to form the misacylated tRNA L-seryl-tRNA(Sec), which will be further converted into selenocysteinyl-tRNA(Sec). This Clostridium botulinum (strain Kyoto / Type A2) protein is Serine--tRNA ligase.